Consider the following 361-residue polypeptide: MSKRAFNFCAGPAALPDAVLQRAQAEMLDWRGKGLSVMEMSHRSDDYVAIAEKAEQDLRDLLSVPSNYKVLFLQGGASQQFAEIPLNLLPENGTADYIETGIWSKKAIEEARRFGNVNVAATAKPYDYLAIPGQNEWNLTKNAAYVHYASNETIGGLQFDWVPQTGDVPLVVDMSSDILSRPIDVSQFGLIYAGAQKNIGPSGLVVVIVREDLLGHARSSCPTMLDYKVSADNGSMYNTPATYSWYLSGLVFEWLKEQGGVEAMEQRNRAKKDRLYGFIDRSEFYTNPISVNARSWMNVPFRLADERLDKAFLAGADARGLLNLKGHRSVGGMRASIYNALGLEAVEALVGYMAEFEKEHG.

Arg-43 serves as a coordination point for L-glutamate. Residues 77 to 78, Trp-103, Thr-153, Asp-173, and Gln-196 each bind pyridoxal 5'-phosphate; that span reads AS. An N6-(pyridoxal phosphate)lysine modification is found at Lys-197. Position 238–239 (238–239) interacts with pyridoxal 5'-phosphate; it reads NT.

It belongs to the class-V pyridoxal-phosphate-dependent aminotransferase family. SerC subfamily. As to quaternary structure, homodimer. It depends on pyridoxal 5'-phosphate as a cofactor.

The protein resides in the cytoplasm. It catalyses the reaction O-phospho-L-serine + 2-oxoglutarate = 3-phosphooxypyruvate + L-glutamate. The enzyme catalyses 4-(phosphooxy)-L-threonine + 2-oxoglutarate = (R)-3-hydroxy-2-oxo-4-phosphooxybutanoate + L-glutamate. It functions in the pathway amino-acid biosynthesis; L-serine biosynthesis; L-serine from 3-phospho-D-glycerate: step 2/3. The protein operates within cofactor biosynthesis; pyridoxine 5'-phosphate biosynthesis; pyridoxine 5'-phosphate from D-erythrose 4-phosphate: step 3/5. Functionally, catalyzes the reversible conversion of 3-phosphohydroxypyruvate to phosphoserine and of 3-hydroxy-2-oxo-4-phosphonooxybutanoate to phosphohydroxythreonine. The sequence is that of Phosphoserine aminotransferase from Pseudomonas putida (strain ATCC 47054 / DSM 6125 / CFBP 8728 / NCIMB 11950 / KT2440).